Reading from the N-terminus, the 338-residue chain is 4-hydroxy-2-oxovalerate aldolase (338 aa).

The 251-residue stretch at 6-256 (IHIVDTTLRD…RTGVDFYKVM (251 aa)) folds into the Pyruvate carboxyltransferase domain. 14–15 (RD) is a substrate binding site. Asp15 serves as a coordination point for Mn(2+). His18 (proton acceptor) is an active-site residue. Ser168 and His195 together coordinate substrate. The Mn(2+) site is built by His195 and His197. Tyr286 serves as a coordination point for substrate.

It belongs to the 4-hydroxy-2-oxovalerate aldolase family.

It catalyses the reaction (S)-4-hydroxy-2-oxopentanoate = acetaldehyde + pyruvate. The protein is 4-hydroxy-2-oxovalerate aldolase of Moorella thermoacetica (strain ATCC 39073 / JCM 9320).